The following is a 1184-amino-acid chain: DNA-directed RNA polymerase subunit beta' (1184 aa).

Residues Cys60, Cys62, Cys75, and Cys78 each coordinate Zn(2+). Residues Asp449, Asp451, and Asp453 each contribute to the Mg(2+) site. Zn(2+) contacts are provided by Cys794, Cys867, Cys874, and Cys877. Residues 1165-1184 form a disordered region; that stretch reads NDQQERQDKEKEETEVKASN.

It belongs to the RNA polymerase beta' chain family. In terms of assembly, the RNAP catalytic core consists of 2 alpha, 1 beta, 1 beta' and 1 omega subunit. When a sigma factor is associated with the core the holoenzyme is formed, which can initiate transcription. Mg(2+) is required as a cofactor. Requires Zn(2+) as cofactor.

It carries out the reaction RNA(n) + a ribonucleoside 5'-triphosphate = RNA(n+1) + diphosphate. DNA-dependent RNA polymerase catalyzes the transcription of DNA into RNA using the four ribonucleoside triphosphates as substrates. The polypeptide is DNA-directed RNA polymerase subunit beta' (Thermoanaerobacter pseudethanolicus (strain ATCC 33223 / 39E) (Clostridium thermohydrosulfuricum)).